Here is a 305-residue protein sequence, read N- to C-terminus: Ribonuclease BN (305 aa).

The Zn(2+) site is built by histidine 64, histidine 66, aspartate 68, histidine 69, histidine 141, aspartate 212, and histidine 270. Aspartate 68 functions as the Proton acceptor in the catalytic mechanism.

The protein belongs to the RNase Z family. RNase BN subfamily. As to quaternary structure, homodimer. Zn(2+) is required as a cofactor.

Functionally, zinc phosphodiesterase, which has both exoribonuclease and endoribonuclease activities. In Escherichia coli O45:K1 (strain S88 / ExPEC), this protein is Ribonuclease BN.